The chain runs to 162 residues: SCF ubiquitin ligase complex protein SKP1a (162 aa).

Residue Ser2 is modified to N-acetylserine. The segment at 100–162 (ILAANYLDIK…NEWCEDKGGN (63 aa)) is interaction with the F-box domain of F-box proteins. A 4-hydroxyproline modification is found at Pro143. O-linked (GlcNAc...) hydroxyproline glycosylation occurs at Pro143.

The protein belongs to the SKP1 family. As to quaternary structure, multiprotein complex (SCF) with cullin and F-box-containing protein. Capable of undergoing aggregation. In terms of processing, O-linked glycan consists of linear Gal-Gal-Fuc-Gal-GlcNAc. FpaA and fpaB seem to be identically glycosylated. Glycosylation is required for nuclear enrichment. Post-translationally, hydroxylated by phyA.

It is found in the cytoplasm. The protein localises to the nucleus. This chain is SCF ubiquitin ligase complex protein SKP1a (fpaA), found in Dictyostelium discoideum (Social amoeba).